We begin with the raw amino-acid sequence, 360 residues long: Alpha-N-acetyl-neuraminyl-2,3-beta-galactosyl-1,3-N-acetyl-galactosaminide alpha-2,6-sialyltransferase (360 aa).

Residues 1-71 (MEHVVTCWRL…PGRLLLLTLC (71 aa)) are Cytoplasmic-facing. Residues 72–94 (ILTFSAVCVFLCCWACLPLCLAT) form a helical; Signal-anchor for type II membrane protein membrane-spanning segment. Over 95-360 (CLDRHLPAAP…VFAHPSWRAK (266 aa)) the chain is Lumenal. Residues cysteine 134 and cysteine 283 are joined by a disulfide bond. A glycan (N-linked (GlcNAc...) asparagine) is linked at asparagine 193.

This sequence belongs to the glycosyltransferase 29 family. As to expression, high expression in brain and colon and to a lesser extent in lung, heart, kidney, spleen and thymus.

The protein localises to the golgi apparatus membrane. The enzyme catalyses an alpha-Neu5Ac-(2-&gt;3)-beta-D-Gal-(1-&gt;3)-D-GlcNAc derivative + CMP-N-acetyl-beta-neuraminate = an alpha-Neu5Ac-(2-&gt;3)-beta-D-Gal-(1-&gt;3)-[alpha-Neu5Ac-(2-&gt;6)]-D-GlcNAc derivative + CMP + H(+). It carries out the reaction N-acetyl-alpha-neuraminosyl-(2-&gt;3)-beta-D-galactosyl-(1-&gt;3)-N-acetyl-D-galactosamine + CMP-N-acetyl-beta-neuraminate = N-acetyl-alpha-neuraminosyl-(2-&gt;3)-beta-D-galactosyl-(1-&gt;3)-[N-acetyl-alpha-neuraminosyl-(2-&gt;6)]-N-acetyl-D-galactosamine + CMP + H(+). It catalyses the reaction a ganglioside GM1b (d18:1(4E)) + CMP-N-acetyl-beta-neuraminate = a ganglioside GD1alpha (d18:1(4E)) + CMP + H(+). The catalysed reaction is 3-O-[alpha-Neu5Ac-(2-&gt;3)-beta-D-Gal-(1-&gt;3)-alpha-D-GalNAc]-L-Ser-[protein] + CMP-N-acetyl-beta-neuraminate = a 3-O-{alpha-Neu5Ac-(2-&gt;3)-beta-D-Gal-(1-&gt;3)-[alpha-Neu5Ac-(2-&gt;6)]-alpha-D-GalNAc}-L-seryl-[protein] + CMP + H(+). The enzyme catalyses 3-O-[alpha-Neu5Ac-(2-&gt;3)-beta-D-Gal-(1-&gt;3)-alpha-D-GalNAc]-L-Thr-[protein] + CMP-N-acetyl-beta-neuraminate = a 3-O-{alpha-Neu5Ac-(2-&gt;3)-beta-D-Gal-(1-&gt;3)-[alpha-Neu5Ac-(2-&gt;6)]-alpha-D-GalNAc}-L-threonyl-[protein] + CMP + H(+). Its pathway is protein modification; protein glycosylation. It participates in glycolipid biosynthesis. Functionally, transfers the sialyl group (N-acetyl-alpha-neuraminyl or NeuAc) from CMP-NeuAc to the GalNAc residue on the NeuAc-alpha-2,3-Gal-beta-1,3-GalNAc sequence of glycoproteins and glycolipids forming an alpha-2,6-linkage. Produces branched type disialyl structures by transfer of a sialyl group onto a GalNAc residue inside the backbone core chains. Prefers O-glycans to glycoproteins or glycolipids. The chain is Alpha-N-acetyl-neuraminyl-2,3-beta-galactosyl-1,3-N-acetyl-galactosaminide alpha-2,6-sialyltransferase (St6galnac4) from Mus musculus (Mouse).